A 189-amino-acid polypeptide reads, in one-letter code: Potassium-transporting ATPase KdpC subunit (189 aa).

A helical transmembrane segment spans residues 5–25 (LLPALTMLLVFTVITGIVYPL).

It belongs to the KdpC family. In terms of assembly, the system is composed of three essential subunits: KdpA, KdpB and KdpC.

The protein localises to the cell membrane. In terms of biological role, part of the high-affinity ATP-driven potassium transport (or Kdp) system, which catalyzes the hydrolysis of ATP coupled with the electrogenic transport of potassium into the cytoplasm. This subunit acts as a catalytic chaperone that increases the ATP-binding affinity of the ATP-hydrolyzing subunit KdpB by the formation of a transient KdpB/KdpC/ATP ternary complex. The protein is Potassium-transporting ATPase KdpC subunit of Mycobacterium bovis (strain ATCC BAA-935 / AF2122/97).